The following is a 117-amino-acid chain: Immunoglobulin heavy variable 1-69D (117 aa).

The first 19 residues, 1 to 19 (MDWTWRFLFVVAAATGVQS), serve as a signal peptide directing secretion. Q20 carries the post-translational modification Pyrrolidone carboxylic acid. The interval 20–44 (QVQLVQSGAEVKKPGSSVKVSCKAS) is framework-1. Positions 20 to 117 (QVQLVQSGAE…EDTAVYYCAR (98 aa)) constitute an Ig-like domain. C41 and C115 are joined by a disulfide. The complementarity-determining-1 stretch occupies residues 45–52 (GGTFSSYA). Residues 53–69 (ISWVRQAPGQGLEWMGG) form a framework-2 region. The tract at residues 70-77 (IIPIFGTA) is complementarity-determining-2. The tract at residues 78–115 (NYAQKFQGRVTITADESTSTAYMELSSLRSEDTAVYYC) is framework-3. Residues 116–117 (AR) are complementarity-determining-3.

In terms of assembly, immunoglobulins are composed of two identical heavy chains and two identical light chains; disulfide-linked.

It is found in the secreted. The protein localises to the cell membrane. In terms of biological role, v region of the variable domain of immunoglobulin heavy chains that participates in the antigen recognition. Immunoglobulins, also known as antibodies, are membrane-bound or secreted glycoproteins produced by B lymphocytes. In the recognition phase of humoral immunity, the membrane-bound immunoglobulins serve as receptors which, upon binding of a specific antigen, trigger the clonal expansion and differentiation of B lymphocytes into immunoglobulins-secreting plasma cells. Secreted immunoglobulins mediate the effector phase of humoral immunity, which results in the elimination of bound antigens. The antigen binding site is formed by the variable domain of one heavy chain, together with that of its associated light chain. Thus, each immunoglobulin has two antigen binding sites with remarkable affinity for a particular antigen. The variable domains are assembled by a process called V-(D)-J rearrangement and can then be subjected to somatic hypermutations which, after exposure to antigen and selection, allow affinity maturation for a particular antigen. The sequence is that of Immunoglobulin heavy variable 1-69D from Homo sapiens (Human).